Reading from the N-terminus, the 232-residue chain is Pseudaminic acid cytidylyltransferase (232 aa).

It belongs to the CMP-NeuNAc synthase family. It depends on Mg(2+) as a cofactor.

It catalyses the reaction pseudaminate + CTP = CMP-pseudaminate + diphosphate. Functionally, catalyzes the final step in the biosynthesis of pseudaminic acid, a sialic-acid-like sugar that is used to modify flagellin. Mediates the activation of pseudaminic acid with CMP by forming CMP-pseudaminic acid. The chain is Pseudaminic acid cytidylyltransferase (pseF) from Campylobacter jejuni subsp. jejuni serotype O:23/36 (strain 81-176).